The chain runs to 354 residues: Clavesin-1 (354 aa).

The CRAL-TRIO domain maps to 118–279; that stretch reads IKRALIDGFP…EFGGTLPPYD (162 aa). Residues 317-354 are disordered; the sequence is RECSPKPMKRSQSVVEAGTLKHEEKGENENTQPLLALD. Over residues 335 to 344 the composition is skewed to basic and acidic residues; sequence TLKHEEKGEN. Over residues 345–354 the composition is skewed to polar residues; it reads ENTQPLLALD.

In terms of assembly, forms a complex with clathrin heavy chain and gamma-adaptin. As to expression, expressed in brain with no expression detected in non-neuronal tissues (at protein level).

Its subcellular location is the golgi apparatus. It is found in the trans-Golgi network membrane. The protein localises to the early endosome membrane. It localises to the cytoplasmic vesicle. The protein resides in the clathrin-coated vesicle. Required for normal morphology of late endosomes and/or lysosomes in neurons. Binds phosphatidylinositol 3,5-bisphosphate (PtdIns(3,5)P2). The sequence is that of Clavesin-1 from Rattus norvegicus (Rat).